Here is a 225-residue protein sequence, read N- to C-terminus: Probable polyketide biosynthesis zinc-dependent hydrolase BaeB (225 aa).

His62, His64, Asp66, His67, His123, Asp140, and His181 together coordinate Zn(2+).

The protein belongs to the metallo-beta-lactamase superfamily. Zn(2+) is required as a cofactor.

The protein localises to the cytoplasm. Its pathway is antibiotic biosynthesis; bacillaene biosynthesis. Its function is as follows. Probably involved in some intermediate steps for the synthesis of the antibiotic polyketide bacillaene which is involved in secondary metabolism. In Bacillus velezensis (strain DSM 23117 / BGSC 10A6 / LMG 26770 / FZB42) (Bacillus amyloliquefaciens subsp. plantarum), this protein is Probable polyketide biosynthesis zinc-dependent hydrolase BaeB (baeB).